A 493-amino-acid polypeptide reads, in one-letter code: Probable fatty acyl-CoA reductase 4 (493 aa).

The protein belongs to the fatty acyl-CoA reductase family. In terms of tissue distribution, expressed in the endodermal cell layer surrounding the central vasculature in roots. Expressed in the hilum region of seeds. Expressed in stamen filaments and receptacle of siliques.

It carries out the reaction a long-chain fatty acyl-CoA + 2 NADPH + 2 H(+) = a long-chain primary fatty alcohol + 2 NADP(+) + CoA. In terms of biological role, catalyzes the reduction of fatty acyl-CoA to fatty alcohols. Catalyzes specifically the formation of C18:0 and C20:0 fatty alcohols. Provides the fatty alcohols required for synthesis of suberin in roots, seed coat and wound-induced leaf tissue. Provides the fatty alcohols required for synthesis of alkyl hydroxycinnamates in root waxes. The protein is Probable fatty acyl-CoA reductase 4 of Arabidopsis thaliana (Mouse-ear cress).